We begin with the raw amino-acid sequence, 368 residues long: Xaa-Pro dipeptidase (368 aa).

The Mn(2+) site is built by Asp-223, Asp-234, His-298, Glu-327, and Glu-341.

This sequence belongs to the peptidase M24B family. Mn(2+) is required as a cofactor.

The protein resides in the cytoplasm. It catalyses the reaction Xaa-L-Pro dipeptide + H2O = an L-alpha-amino acid + L-proline. This is Xaa-Pro dipeptidase (pepQ) from Lactobacillus helveticus (Lactobacillus suntoryeus).